A 155-amino-acid polypeptide reads, in one-letter code: Aspartate carbamoyltransferase regulatory chain (155 aa).

Zn(2+)-binding residues include Cys109, Cys114, Cys138, and Cys141.

It belongs to the PyrI family. Contains catalytic and regulatory chains. Zn(2+) serves as cofactor.

In terms of biological role, involved in allosteric regulation of aspartate carbamoyltransferase. This Vibrio cholerae serotype O1 (strain ATCC 39315 / El Tor Inaba N16961) protein is Aspartate carbamoyltransferase regulatory chain.